The chain runs to 492 residues: GTPase-activating protein MSB4 (492 aa).

Residues 147–367 (GIPAEWRGNA…RIWDCLFYEE (221 aa)) enclose the Rab-GAP TBC domain.

The protein resides in the cytoplasm. It localises to the bud. It is found in the bud neck. Its function is as follows. Regulates exocytosis by functioning as a GAP for SEC4. Also required for efficient polarization of the actin patches. The polypeptide is GTPase-activating protein MSB4 (MSB4) (Saccharomyces cerevisiae (strain ATCC 204508 / S288c) (Baker's yeast)).